The primary structure comprises 366 residues: Ribosomal RNA large subunit methyltransferase M (366 aa).

S-adenosyl-L-methionine contacts are provided by residues S187, S220 to G223, D239, D259, and D276. K305 acts as the Proton acceptor in catalysis.

The protein belongs to the class I-like SAM-binding methyltransferase superfamily. RNA methyltransferase RlmE family. RlmM subfamily. In terms of assembly, monomer.

It localises to the cytoplasm. The enzyme catalyses cytidine(2498) in 23S rRNA + S-adenosyl-L-methionine = 2'-O-methylcytidine(2498) in 23S rRNA + S-adenosyl-L-homocysteine + H(+). In terms of biological role, catalyzes the 2'-O-methylation at nucleotide C2498 in 23S rRNA. The polypeptide is Ribosomal RNA large subunit methyltransferase M (Tolumonas auensis (strain DSM 9187 / NBRC 110442 / TA 4)).